The primary structure comprises 93 residues: Acylphosphatase (93 aa).

A disulfide bridge links Cys-5 with Cys-49. Residues 5-93 (CIIAWVYGRV…ETLTGFSIRY (89 aa)) form the Acylphosphatase-like domain. The active site involves Asn-38.

It belongs to the acylphosphatase family.

The enzyme catalyses an acyl phosphate + H2O = a carboxylate + phosphate + H(+). This is Acylphosphatase from Salmonella paratyphi A (strain ATCC 9150 / SARB42).